The chain runs to 785 residues: Probable ATP-dependent RNA helicase ddx17 (785 aa).

4 stretches are compositionally biased toward low complexity: residues 1–11 (MSYNSSNSGSG), 18–37 (SGNSSYSSTSRGGSSYGNRS), 49–95 (SYNR…YGPS), and 105–177 (GSSS…NGYS). A disordered region spans residues 1–233 (MSYNSSNSGS…TPSTSYNGGS (233 aa)). Positions 178 to 191 (KPTSNYSYSNGYTG) are enriched in polar residues. The segment covering 192 to 233 (PTTNYSSYSNGYSTPPTSTSTSSSSTTTTTTTTPSTSYNGGS) has biased composition (low complexity). A Q motif motif is present at residues 384 to 412 (MQFTQAPFPGYLMKEIIGAGFPNPTPIQS). One can recognise a Helicase ATP-binding domain in the interval 415-590 (WPIALKGRDI…HDFLTDHIQV (176 aa)). 428 to 435 (AKTGSGKT) lines the ATP pocket. Positions 538 to 541 (DEAD) match the DEAD box motif. Residues 602–763 (NVRQIVEVCQ…KIPIELSNLS (162 aa)) enclose the Helicase C-terminal domain. A compositionally biased stretch (polar residues) spans 764–774 (VTPSTSSNTKK). Residues 764 to 785 (VTPSTSSNTKKFSPYPTYSKRY) form a disordered region.

The protein belongs to the DEAD box helicase family. DDX5/DBP2 subfamily.

It is found in the cytoplasm. It localises to the nucleus. The catalysed reaction is ATP + H2O = ADP + phosphate + H(+). Functionally, probable ATP-dependent RNA helicase which may be involved nonsense-mediated mRNA decay and ribosome biogenesis through rRNA processing. This Dictyostelium discoideum (Social amoeba) protein is Probable ATP-dependent RNA helicase ddx17 (ddx17).